Reading from the N-terminus, the 547-residue chain is Glucocorticoid-induced transcript 1 protein (547 aa).

The segment covering 1–13 has biased composition (low complexity); the sequence is MSTASSSSSSSSS. 2 disordered regions span residues 1 to 55 and 72 to 285; these read MSTA…APAA and LLRG…LSNI. Residue serine 20 is modified to Phosphoserine. Over residues 26-38 the composition is skewed to low complexity; that stretch reads SAAGSPPAVAAAG. Residues 39 to 50 show a composition bias toward gly residues; it reads SGNGAGGGGGVG. Phosphoserine occurs at positions 79, 105, 107, and 108. The segment covering 86–105 has biased composition (low complexity); that stretch reads AAAAASLGSLPGPGAARGPS. Position 110 is a phosphothreonine (threonine 110). A compositionally biased stretch (basic and acidic residues) spans 130–145; sequence RSPESHRRSSSPERRS. The segment covering 162 to 177 has biased composition (low complexity); it reads RTSSTIRRTSSLDTIT. A phosphoserine mark is found at serine 171 and serine 172. 2 positions are modified to phosphothreonine: threonine 175 and threonine 177. The span at 187-201 shows a compositional bias: basic and acidic residues; the sequence is RDPHVHYPSCMKDKA. A Phosphoserine modification is found at serine 223. A coiled-coil region spans residues 225–254; it reads GSADQLKEQIAKLRQQLQRSKQSSRHSKEK. Positions 236 to 245 are enriched in low complexity; that stretch reads KLRQQLQRSK. A Phosphoserine modification is found at serine 258. Residues 265-276 are compositionally biased toward polar residues; that stretch reads ITISHTQATGSR. A Phosphothreonine modification is found at threonine 266. Serine 303 is modified (phosphoserine). Over residues 319–331 the composition is skewed to basic and acidic residues; the sequence is EVSKPLDIPDGRR. The segment at 319 to 417 is disordered; sequence EVSKPLDIPD…KPNNSYMFKR (99 aa). The span at 339 to 356 shows a compositional bias: polar residues; the sequence is RSSSTRSIDTQTPSVQER. The residue at position 343 (threonine 343) is a Phosphothreonine. Serine 345 carries the phosphoserine modification. At threonine 350 the chain carries Phosphothreonine. Residues 357–369 are compositionally biased toward low complexity; it reads SSSCSSHSPCVSP. A phosphoserine mark is found at serine 394, serine 398, serine 406, serine 412, and serine 480. The segment covering 505 to 520 has biased composition (polar residues); sequence SLSDDTSTAGSMEASV. Residues 505–530 form a disordered region; that stretch reads SLSDDTSTAGSMEASVQQPSQQQQLL. Low complexity predominate over residues 521–530; that stretch reads QQPSQQQQLL.

As to expression, predominantly expressed in lung, spleen, thymus and testis and, at lower levels, in brain, bone marrow, peripheral leukocytes, skin and trachea.

The polypeptide is Glucocorticoid-induced transcript 1 protein (GLCCI1) (Homo sapiens (Human)).